A 308-amino-acid chain; its full sequence is Cap-specific mRNA (nucleoside-2'-O-)-methyltransferase (308 aa).

Residue tyrosine 30 participates in mRNA binding. S-adenosyl-L-methionine-binding residues include glutamine 46, tyrosine 74, glycine 76, glycine 80, aspartate 103, arginine 105, valine 124, and aspartate 147. A binding to NPH-I region spans residues 177 to 257; that stretch reads PIASSLKWRC…NTKIRPKIVL (81 aa). The For methyltransferase activity role is filled by lysine 183. MRNA-binding positions include 185–188, aspartate 190, 213–215, and glutamate 241; these read RCPF and SAE.

Belongs to the class I-like SAM-binding methyltransferase superfamily. Poxvirus/kinetoplastid 2'-O-MTase family. In terms of assembly, interacts with poly(A) polymerase catalytic subunit OPG063. Interacts with OPG109 and OPG123; these interactions might help linking transcription to capping and polyadenylation.

It is found in the virion. The catalysed reaction is a 5'-end (N(7)-methyl 5'-triphosphoguanosine)-ribonucleoside in mRNA + S-adenosyl-L-methionine = a 5'-end (N(7)-methyl 5'-triphosphoguanosine)-(2'-O-methyl-ribonucleoside) in mRNA + S-adenosyl-L-homocysteine + H(+). Displays methyltransferase, positive regulation of the poly(A) polymerase and transcription elongation activities. Involved in the modification of both mRNA ends and in intermediate and late gene positive transcription elongation. At the mRNAs 5' end, methylates the ribose 2' OH group of the first transcribed nucleotide, thereby producing a 2'-O-methylpurine cap. At the 3' end, functions as a processivity factor which stimulates the activity of the viral poly(A) polymerase OPG063 that creates mRNA's poly(A) tail. In the presence of OPG102, OPG063 does not dissociate from the RNA allowing tail elongation to around 250 adenylates. This is Cap-specific mRNA (nucleoside-2'-O-)-methyltransferase (OPG102) from Fowlpox virus (strain NVSL) (FPV).